A 315-amino-acid polypeptide reads, in one-letter code: GTP cyclohydrolase MptA (315 aa).

This sequence belongs to the GTP cyclohydrolase IV family. Homodimer. It depends on Fe(2+) as a cofactor.

It carries out the reaction GTP + H2O = 7,8-dihydroneopterin 2',3'-cyclic phosphate + formate + diphosphate + H(+). It functions in the pathway cofactor biosynthesis; 5,6,7,8-tetrahydromethanopterin biosynthesis. Functionally, converts GTP to 7,8-dihydro-D-neopterin 2',3'-cyclic phosphate, the first intermediate in the biosynthesis of coenzyme methanopterin. In Methanococcus maripaludis (strain C5 / ATCC BAA-1333), this protein is GTP cyclohydrolase MptA.